We begin with the raw amino-acid sequence, 201 residues long: Peptidyl-tRNA hydrolase (201 aa).

Tyr-15 contributes to the tRNA binding site. The Proton acceptor role is filled by His-20. Residues Tyr-66, Asn-68, and Asn-114 each coordinate tRNA.

This sequence belongs to the PTH family. In terms of assembly, monomer.

Its subcellular location is the cytoplasm. The catalysed reaction is an N-acyl-L-alpha-aminoacyl-tRNA + H2O = an N-acyl-L-amino acid + a tRNA + H(+). In terms of biological role, hydrolyzes ribosome-free peptidyl-tRNAs (with 1 or more amino acids incorporated), which drop off the ribosome during protein synthesis, or as a result of ribosome stalling. Functionally, catalyzes the release of premature peptidyl moieties from peptidyl-tRNA molecules trapped in stalled 50S ribosomal subunits, and thus maintains levels of free tRNAs and 50S ribosomes. This is Peptidyl-tRNA hydrolase from Burkholderia mallei (strain NCTC 10247).